Here is a 103-residue protein sequence, read N- to C-terminus: Trp operon repressor homolog (103 aa).

Residues Gln62–His85 mediate DNA binding.

The protein belongs to the TrpR family. Homodimer.

It localises to the cytoplasm. Functionally, this protein is an aporepressor. When complexed with L-tryptophan it binds the operator region of the trp operon and prevents the initiation of transcription. The sequence is that of Trp operon repressor homolog from Photobacterium profundum (strain SS9).